We begin with the raw amino-acid sequence, 467 residues long: MRLPRHIGPIHFVGIGGIGMSGIAEVLCNLGYTVQGSDASESANVNRLREKGIQIHVGHQADNIKGADVLVVSTAIKRDNPELLAARAQRIPVVRRAEMLAELMRLKSCVAIAGTHGKTTTTSMVAALLDAGDLDPTVINGGIINAYGTNARLGGGDWMVVEADESDGTFLKLPADVAIVTNVDPEHLDHFKTFDAVQDAFRNFVENVPFYGFAVMCIDHPVVQTLVGKIEDRRIITYGENPQADARLLDLAASGGGSTFKVAFRDRKAGTAHEIADLKLPMPGRHNALNATAAIAVAHELGLSDDTIRKALAAFGGVRRRFTKTGEWNGVTIIDDYGHHPVEIAAVLKAARQSTAGKVIAVVQPHRFSRLQSLFEEFCTCFNDADAVIVADVYPAGEAPIEGIDRDHFVLGLRAHGHRDVVALQDSASLAGVVAGLAHSGDYVVCLGAGNITQWAYALPGELKALG.

Residue 114-120 (GTHGKTT) participates in ATP binding.

This sequence belongs to the MurCDEF family.

Its subcellular location is the cytoplasm. The catalysed reaction is UDP-N-acetyl-alpha-D-muramate + L-alanine + ATP = UDP-N-acetyl-alpha-D-muramoyl-L-alanine + ADP + phosphate + H(+). Its pathway is cell wall biogenesis; peptidoglycan biosynthesis. Its function is as follows. Cell wall formation. The protein is UDP-N-acetylmuramate--L-alanine ligase of Rhodopseudomonas palustris (strain ATCC BAA-98 / CGA009).